Reading from the N-terminus, the 154-residue chain is Myoglobin (154 aa).

One can recognise a Globin domain in the interval 2-148 (GLSDGEWQLV…FRNDMAAKYK (147 aa)). S4 carries the post-translational modification Phosphoserine. H65 serves as a coordination point for nitrite. An O2-binding site is contributed by H65. T68 bears the Phosphothreonine mark. Heme b is bound at residue H94.

It belongs to the globin family. As to quaternary structure, monomeric.

The protein resides in the cytoplasm. It localises to the sarcoplasm. It carries out the reaction Fe(III)-heme b-[protein] + nitric oxide + H2O = Fe(II)-heme b-[protein] + nitrite + 2 H(+). It catalyses the reaction H2O2 + AH2 = A + 2 H2O. Its function is as follows. Monomeric heme protein which primary function is to store oxygen and facilitate its diffusion within muscle tissues. Reversibly binds oxygen through a pentacoordinated heme iron and enables its timely and efficient release as needed during periods of heightened demand. Depending on the oxidative conditions of tissues and cells, and in addition to its ability to bind oxygen, it also has a nitrite reductase activity whereby it regulates the production of bioactive nitric oxide. Under stress conditions, like hypoxia and anoxia, it also protects cells against reactive oxygen species thanks to its pseudoperoxidase activity. The protein is Myoglobin (MB) of Erythrocebus patas (Red guenon).